A 233-amino-acid chain; its full sequence is 5'-methylthioadenosine/S-adenosylhomocysteine nucleosidase (233 aa).

E12 serves as the catalytic Proton acceptor. Substrate is bound by residues G78, I156, and 177–178; that span reads ME. D201 (proton donor) is an active-site residue.

The protein belongs to the PNP/UDP phosphorylase family. MtnN subfamily.

It carries out the reaction S-adenosyl-L-homocysteine + H2O = S-(5-deoxy-D-ribos-5-yl)-L-homocysteine + adenine. The enzyme catalyses S-methyl-5'-thioadenosine + H2O = 5-(methylsulfanyl)-D-ribose + adenine. The catalysed reaction is 5'-deoxyadenosine + H2O = 5-deoxy-D-ribose + adenine. Its pathway is amino-acid biosynthesis; L-methionine biosynthesis via salvage pathway; S-methyl-5-thio-alpha-D-ribose 1-phosphate from S-methyl-5'-thioadenosine (hydrolase route): step 1/2. Functionally, catalyzes the irreversible cleavage of the glycosidic bond in both 5'-methylthioadenosine (MTA) and S-adenosylhomocysteine (SAH/AdoHcy) to adenine and the corresponding thioribose, 5'-methylthioribose and S-ribosylhomocysteine, respectively. Also cleaves 5'-deoxyadenosine, a toxic by-product of radical S-adenosylmethionine (SAM) enzymes, into 5-deoxyribose and adenine. This is 5'-methylthioadenosine/S-adenosylhomocysteine nucleosidase from Listeria monocytogenes serotype 4b (strain CLIP80459).